The following is a 231-amino-acid chain: Glutathione-specific gamma-glutamylcyclotransferase (231 aa).

49–54 lines the substrate pocket; that stretch reads IFGYGS. The active-site Proton acceptor is E127.

This sequence belongs to the gamma-glutamylcyclotransferase family. ChaC subfamily.

It catalyses the reaction glutathione = L-cysteinylglycine + 5-oxo-L-proline. Catalyzes the cleavage of glutathione into 5-oxo-L-proline and a Cys-Gly dipeptide. Acts specifically on glutathione, but not on other gamma-glutamyl peptides. The chain is Glutathione-specific gamma-glutamylcyclotransferase from Escherichia coli (strain K12).